The sequence spans 98 residues: DNA-binding protein Fis (98 aa).

A DNA-binding region (H-T-H motif) is located at residues 74–93; the sequence is QTRAAQMMGINRGTLRKKLK.

Belongs to the transcriptional regulatory Fis family. In terms of assembly, homodimer.

In terms of biological role, activates ribosomal RNA transcription. Plays a direct role in upstream activation of rRNA promoters. This is DNA-binding protein Fis from Proteus hauseri.